Here is a 268-residue protein sequence, read N- to C-terminus: Zinc finger protein SNAI2 (268 aa).

The SNAG domain stretch occupies residues 1-20 (MPRSFLVKKHFNASKKPNYS). Positions 84–116 (GRVSPLPSSDTSSKDHSGSESPISDEEERLQPK) are disordered. C2H2-type zinc fingers lie at residues 128-150 (FQCNLCNKTYSTFSGLAKHKQLH), 159-181 (FSCKYCDKEYVSLGALKMHIRTH), 185-207 (CVCKICGKAFSRPWLLQGHIRTH), and 213-235 (FSCPHCNRAFADRSNLRAHLQTH). The segment at 241 to 264 (YQCKNCSKTFSRMSLLHKHEESGC) adopts a C2H2-type 5; atypical zinc-finger fold.

The protein belongs to the snail C2H2-type zinc-finger protein family. As to quaternary structure, interacts (via SNAG domain) with LIMD1 (via LIM domains), WTIP (via LIM domains) and AJUBA (via LIM domains). Interacts (via zinc fingers) with KPNA2, KPNB1 and TNPO1. May interact (via zinc fingers) with IPO7. In terms of processing, phosphorylated by GSK3B. Once phosphorylated, it becomes a target for ubiquitination. Ubiquitinated by the SCF(FBXO11) complex; ubiquitination requires previous GSK3B-mediated SNAI2 phosphorylation.

The protein localises to the nucleus. It is found in the cytoplasm. In terms of biological role, transcriptional repressor that modulates both activator-dependent and basal transcription. Involved in the generation and migration of neural crest cells. Plays a role in mediating RAF1-induced transcriptional repression of the TJ protein, occludin (OCLN) and subsequent oncogenic transformation of epithelial cells. Represses BRCA2 expression by binding to its E2-box-containing silencer and recruiting CTBP1 and HDAC1 in breast cells. In epidermal keratinocytes, binds to the E-box in ITGA3 promoter and represses its transcription. Involved in the regulation of ITGB1 and ITGB4 expression and cell adhesion and proliferation in epidermal keratinocytes. Binds to E-box2 domain of BSG and activates its expression during TGFB1-induced epithelial-mesenchymal transition (EMT) in hepatocytes. Represses E-Cadherin/CDH1 transcription via E-box elements. Involved in osteoblast maturation. Binds to RUNX2 and SOC9 promoters and may act as a positive and negative transcription regulator, respectively, in osteoblasts. Binds to CXCL12 promoter via E-box regions in mesenchymal stem cells and osteoblasts. Plays an essential role in TWIST1-induced EMT and its ability to promote invasion and metastasis. This Rattus norvegicus (Rat) protein is Zinc finger protein SNAI2 (Snai2).